Here is a 309-residue protein sequence, read N- to C-terminus: Epidermal retinol dehydrogenase 2 (309 aa).

Residues Leu11–Ile31 form a helical membrane-spanning segment. Residue Leu44 to Val68 participates in NADP(+) binding. Ser177 is a binding site for substrate. Catalysis depends on Tyr190, which acts as the Proton acceptor. A helical membrane pass occupies residues Phe270–Ala290.

Belongs to the short-chain dehydrogenases/reductases (SDR) family.

The protein localises to the endoplasmic reticulum membrane. The catalysed reaction is all-trans-retinol--[retinol-binding protein] + NAD(+) = all-trans-retinal--[retinol-binding protein] + NADH + H(+). Its pathway is cofactor metabolism; retinol metabolism. Functionally, oxidoreductase with strong preference for NAD. Active in both the oxidative and reductive directions. Oxidizes all-trans-retinol in all-trans-retinaldehyde. No activity was detected with 11-cis-retinol or 11-cis-retinaldehyde as substrates with either NAD(+)/NADH or NADP(+)/NADPH. The chain is Epidermal retinol dehydrogenase 2 from Mus musculus (Mouse).